Here is a 129-residue protein sequence, read N- to C-terminus: M-zodatoxin-Lt8c (129 aa).

The first 20 residues, 1 to 20 (MKYFVVALALVAAFACIAES), serve as a signal peptide directing secretion. Positions 21-60 (KPAESEHELAEVEEENELADLEDAVWLEHLADLSDLEEAR) are excised as a propeptide. A Processing quadruplet motif motif is present at residues 57 to 60 (EEAR).

Cleavage of the propeptide depends on the processing quadruplet motif (XXXR, with at least one of X being E). As to expression, expressed by the venom gland.

Its subcellular location is the secreted. Insecticidal, cytolytic and antimicrobial peptide. Forms voltage-dependent, ion-permeable channels in membranes. At high concentration causes cell membrane lysis. The protein is M-zodatoxin-Lt8c (cit 1-3) of Lachesana tarabaevi (Spider).